Consider the following 509-residue polypeptide: MDFGSFLLYALGVLASLALYFVRWNFGYWKRRGIPHEEPHLVMGNVKGLRSKYHIGEIIADYYRKFKGSDPLPGIFLGHKPAAVVLDKELRKRVLIKDFSNFANRGLYYNEKDDPLTGHLVMVEGEKWRSLRTKLSPTFTAGKMKYMYNTVLEVGQRLLEVMYEKLEVSSELDMRDILARFNTDVIGSVAFGIECNSLRNPHDRFLAMGRKSIEVPRHNALIMAFIDSFPELSRKLGMRVLPEDVHQFFMSSIKETVDYREKNNIRRNDFLDLVLDLKNNPESISKLGGLTFNELAAQVFVFFLGGFETSSSTMGFALYELAQNQQLQDRLREEVNEVFDQFKEDNISYDALMNIPYLDQVLNETLRKYPVGVGSALTRQTLNDYVVPHNPKYVLPKGTLVFIPVLGIHYDPELYPNPEEFDPERFSPEMVKQRDSVDWLGFGDGPRNCIGMRFGKMQSRLGLALVIRHFRFTVCSRTDIPMQINPESLAWTPKNNLYLNVQAIRKKIK.

A heme-binding site is contributed by cysteine 449.

The protein belongs to the cytochrome P450 family. Heme serves as cofactor.

The protein resides in the endoplasmic reticulum membrane. It is found in the microsome membrane. The catalysed reaction is an organic molecule + reduced [NADPH--hemoprotein reductase] + O2 = an alcohol + oxidized [NADPH--hemoprotein reductase] + H2O + H(+). In terms of biological role, involved in the metabolism of insect hormones and in the breakdown of synthetic insecticides. This Musca domestica (House fly) protein is Cytochrome P450 6A1 (CYP6A1).